The sequence spans 610 residues: Protein Smaug homolog 1 (610 aa).

S67 bears the Phosphoserine mark. 3 disordered regions span residues 177 to 222 (ARGP…EEGS), 318 to 366 (SSPS…LQPP), and 464 to 487 (NRGF…GRRN). Residues 222–295 (SGMKDVPAWL…LKSLERDIIE (74 aa)) form the SAM domain. S319 bears the Phosphoserine mark. At T323 the chain carries Phosphothreonine. Residues 344-358 (SAATVTSATASASAG) are compositionally biased toward low complexity. R465 is modified (omega-N-methylarginine). Residues 467 to 480 (FGQSNSLPTASSVG) are compositionally biased toward polar residues. Position 472 is a phosphoserine (S472).

It belongs to the SMAUG family. As to expression, expressed in brain (at protein level).

The protein resides in the cytoplasm. Its subcellular location is the cell projection. It localises to the dendrite. It is found in the synapse. The protein localises to the synaptosome. In terms of biological role, acts as a translational repressor of SRE-containing messengers. This chain is Protein Smaug homolog 1 (Samd4a), found in Rattus norvegicus (Rat).